We begin with the raw amino-acid sequence, 333 residues long: Salivary glue protein Sgs-3 (333 aa).

An N-terminal signal peptide occupies residues Met-1–Gly-23. A disordered region spans residues Thr-51 to Cys-285. The span at Cys-60 to Arg-73 shows a compositional bias: pro residues. Low complexity predominate over residues Pro-74–Pro-88. The segment covering Thr-89–Thr-277 has biased composition (basic residues).

In Drosophila erecta (Fruit fly), this protein is Salivary glue protein Sgs-3 (Sgs3).